The primary structure comprises 858 residues: Leucine--tRNA ligase (858 aa).

Positions 43 to 54 (PYPSGDGLHVGH) match the 'HIGH' region motif. A 'KMSKS' region motif is present at residues 629–633 (KMSKS). K632 contacts ATP.

The protein belongs to the class-I aminoacyl-tRNA synthetase family.

The protein resides in the cytoplasm. It carries out the reaction tRNA(Leu) + L-leucine + ATP = L-leucyl-tRNA(Leu) + AMP + diphosphate. This chain is Leucine--tRNA ligase, found in Treponema denticola (strain ATCC 35405 / DSM 14222 / CIP 103919 / JCM 8153 / KCTC 15104).